The chain runs to 318 residues: TPR repeat-containing protein MJ0940 (318 aa).

TPR repeat units follow at residues 17 to 50 (SLTYLIKSYEYRDRGNLLESLYYLDKALELNPDF), 84 to 117 (PVAYALLGQLYELLGNFDNALECYEKSLGIEEKF), 119 to 151 (TAFFLKVLCLGLSGKYDELLKCCDRLISFAPNF), 152 to 185 (IPAYIIKANMLRKLGRYEEALACVNKVLELKEND), 186 to 219 (TNAIYLKALILNRIGNCDEALKYYEKLIDELNVT), 221 to 254 (IEVIREAIYLSFLFNKLDKAEKYIEMGLKLRPDD), 255 to 288 (ASLWYFKGKLYEKQNKFEEALKYYNKAIQLMPHH), and 289 to 318 (TKALLAKARVLEKLGRIEESIECYNKALDR).

In Methanocaldococcus jannaschii (strain ATCC 43067 / DSM 2661 / JAL-1 / JCM 10045 / NBRC 100440) (Methanococcus jannaschii), this protein is TPR repeat-containing protein MJ0940.